Reading from the N-terminus, the 357-residue chain is DNA primase small subunit PriS (357 aa).

Active-site residues include Asp-105, Asp-107, and Asp-259.

The protein belongs to the eukaryotic-type primase small subunit family. Heterodimer of a small subunit (PriS) and a large subunit (PriL). Requires Mg(2+) as cofactor. Mn(2+) is required as a cofactor.

Functionally, catalytic subunit of DNA primase, an RNA polymerase that catalyzes the synthesis of short RNA molecules used as primers for DNA polymerase during DNA replication. The small subunit contains the primase catalytic core and has DNA synthesis activity on its own. Binding to the large subunit stabilizes and modulates the activity, increasing the rate of DNA synthesis while decreasing the length of the DNA fragments, and conferring RNA synthesis capability. The DNA polymerase activity may enable DNA primase to also catalyze primer extension after primer synthesis. May also play a role in DNA repair. The protein is DNA primase small subunit PriS of Methanococcus maripaludis (strain DSM 14266 / JCM 13030 / NBRC 101832 / S2 / LL).